The chain runs to 338 residues: Biotin synthase (338 aa).

The region spanning 59–284 is the Radical SAM core domain; that stretch reads EEVEIEGIVS…RTTLRFAGGR (226 aa). Cys-74, Cys-78, and Cys-81 together coordinate [4Fe-4S] cluster. 3 residues coordinate [2Fe-2S] cluster: Cys-117, Cys-209, and Arg-279.

This sequence belongs to the radical SAM superfamily. Biotin synthase family. Homodimer. [4Fe-4S] cluster serves as cofactor. Requires [2Fe-2S] cluster as cofactor.

It carries out the reaction (4R,5S)-dethiobiotin + (sulfur carrier)-SH + 2 reduced [2Fe-2S]-[ferredoxin] + 2 S-adenosyl-L-methionine = (sulfur carrier)-H + biotin + 2 5'-deoxyadenosine + 2 L-methionine + 2 oxidized [2Fe-2S]-[ferredoxin]. It participates in cofactor biosynthesis; biotin biosynthesis; biotin from 7,8-diaminononanoate: step 2/2. Functionally, catalyzes the conversion of dethiobiotin (DTB) to biotin by the insertion of a sulfur atom into dethiobiotin via a radical-based mechanism. The protein is Biotin synthase of Corynebacterium urealyticum (strain ATCC 43042 / DSM 7109).